We begin with the raw amino-acid sequence, 263 residues long: Undecaprenyl-diphosphatase 3 (263 aa).

Transmembrane regions (helical) follow at residues 15-37 (GLTEFLPVSSTGHMILTGHLIGF), 42-62 (AKVFEVVIQLGSILAVVVIFW), 83-103 (LHIIIGMIPAGVLGVLFHSAI), 106-126 (VLFGPGPVVISLVAGGILMIV), 142-162 (ITYKQAFTIGMFQCLALWPGF), 183-203 (AEYTFILAVPMMVAASGLDLI), 216-236 (LFATGFITAFVVAMLAIVSFL), and 242-262 (VKLTPFAYYRFILAAVFYFFI).

This sequence belongs to the UppP family.

It localises to the cell membrane. It catalyses the reaction di-trans,octa-cis-undecaprenyl diphosphate + H2O = di-trans,octa-cis-undecaprenyl phosphate + phosphate + H(+). Its function is as follows. Catalyzes the dephosphorylation of undecaprenyl diphosphate (UPP). Confers resistance to bacitracin. The chain is Undecaprenyl-diphosphatase 3 from Bacillus thuringiensis subsp. konkukian (strain 97-27).